The chain runs to 106 residues: Diptericin A (106 aa).

An N-terminal signal peptide occupies residues 1–19; sequence MQFTIAVALLCCAIASTLA. A propeptide spans 20–23 (removed by a dipeptidylpeptidase); sequence YPMP.

Belongs to the attacin/sarcotoxin-2 family.

It localises to the secreted. Functionally, antimicrobial peptide required to resist Gram-negative bacterial infections, regulated by Dredd. The protein is Diptericin A of Drosophila melanogaster (Fruit fly).